The following is a 162-amino-acid chain: 6,7-dimethyl-8-ribityllumazine synthase (162 aa).

5-amino-6-(D-ribitylamino)uracil contacts are provided by residues Phe-23, 61–63, and 85–87; these read AYE and AVI. A (2S)-2-hydroxy-3-oxobutyl phosphate-binding site is contributed by 90-91; that stretch reads DT. His-93 (proton donor) is an active-site residue. Position 118 (Phe-118) interacts with 5-amino-6-(D-ribitylamino)uracil. Arg-132 serves as a coordination point for (2S)-2-hydroxy-3-oxobutyl phosphate.

This sequence belongs to the DMRL synthase family.

It catalyses the reaction (2S)-2-hydroxy-3-oxobutyl phosphate + 5-amino-6-(D-ribitylamino)uracil = 6,7-dimethyl-8-(1-D-ribityl)lumazine + phosphate + 2 H2O + H(+). It functions in the pathway cofactor biosynthesis; riboflavin biosynthesis; riboflavin from 2-hydroxy-3-oxobutyl phosphate and 5-amino-6-(D-ribitylamino)uracil: step 1/2. Its function is as follows. Catalyzes the formation of 6,7-dimethyl-8-ribityllumazine by condensation of 5-amino-6-(D-ribitylamino)uracil with 3,4-dihydroxy-2-butanone 4-phosphate. This is the penultimate step in the biosynthesis of riboflavin. The polypeptide is 6,7-dimethyl-8-ribityllumazine synthase (Synechococcus sp. (strain CC9902)).